Reading from the N-terminus, the 937-residue chain is Coiled-coil domain-containing protein 39 (937 aa).

4 coiled-coil regions span residues 16-137 (AIPV…CQMN), 165-339 (QQDD…KKDI), 365-615 (EKTL…SQIR), and 664-816 (VIKA…LKQT). A disordered region spans residues 866 to 937 (LPTARGPSSR…NIPKEKKLSK (72 aa)). Low complexity predominate over residues 873-887 (SSRSSSQSSSLSSFR). Phosphoserine occurs at positions 888 and 896. A compositionally biased stretch (low complexity) spans 915–928 (NDSSRSASSGSNSN).

The protein belongs to the CCDC39 family. As to expression, strongly expressed in tissues rich in ciliated cells. Expressed in olfactory and vomeronasal sensory neurons and the respiratory epithelium. Expressed in node cells carrying motile cilia, in upper and lower airways, and in ependymal and choroid plexus cells.

The protein localises to the cytoplasm. The protein resides in the cytoskeleton. Its subcellular location is the cilium axoneme. Its function is as follows. Required for assembly of dynein regulatory complex (DRC) and inner dynein arm (IDA) complexes, which are responsible for ciliary beat regulation, thereby playing a central role in motility in cilia and flagella. Probably acts together with CCDC40 to form a molecular ruler that determines the 96 nanometer (nm) repeat length and arrangements of components in cilia and flagella. Not required for outer dynein arm complexes assembly. The polypeptide is Coiled-coil domain-containing protein 39 (Mus musculus (Mouse)).